A 162-amino-acid polypeptide reads, in one-letter code: Ubiquitin D (162 aa).

Ubiquitin-like domains lie at 3-78 (SVRT…LKVV) and 87-160 (LFLV…THCT).

The protein belongs to the ubiquitin D family. In terms of assembly, interacts directly with the 26S proteasome. Interacts with NUB1; this interaction facilitates the linking of UBD-conjugated target protein to the proteasome complex and accelerates its own degradation and that of its conjugates. Interacts (via ubiquitin-like 1 domain) with the spindle checkpoint protein MAD2L1 during mitosis. Present in aggresomes of proteasome inhibited cells. Interacts with HDAC6 under proteasome impairment conditions. Forms a thioester with UBA6 in cells stimulated with tumor necrosis factor-alpha (TNFa) and interferon-gamma (IFNg). Interacts with SQSTM1 and TP53/p53. Can be acetylated. As to expression, mostly expressed in thymus and intestine.

It localises to the nucleus. The protein resides in the cytoplasm. Functionally, ubiquitin-like protein modifier which can be covalently attached to target proteins and subsequently leads to their degradation by the 26S proteasome, in a NUB1-dependent manner. Conjugation to the target protein is activated by UBA6 via adenylation of its C-terminal glycine. Probably functions as a survival factor. Promotes the expression of the proteasome subunit beta type-9 (PSMB9/LMP2). Regulates TNF-alpha-induced and LPS-mediated activation of the central mediator of innate immunity NF-kappa-B by promoting TNF-alpha-mediated proteasomal degradation of ubiquitinated-I-kappa-B-alpha. Required for TNF-alpha-induced p65 nuclear translocation in renal tubular epithelial cells (RTECs). May be involved in dendritic cell (DC) maturation, the process by which immature dendritic cells differentiate into fully competent antigen-presenting cells that initiate T-cell responses. Mediates mitotic non-disjunction and chromosome instability, in long-term in vitro culture and cancers, by abbreviating mitotic phase and impairing the kinetochore localization of MAD2L1 during the prometaphase stage of the cell cycle. May be involved in the formation of aggresomes when proteasome is saturated or impaired. Mediates apoptosis in a caspase-dependent manner, especially in renal epithelium and tubular cells during renal diseases. This is Ubiquitin D (Ubd) from Mus musculus (Mouse).